We begin with the raw amino-acid sequence, 263 residues long: Gap junction beta-6 protein (263 aa).

Topologically, residues 1 to 19 (MDWGALQTILGGVNKHSTS) are cytoplasmic. The helical transmembrane segment at 20–40 (IGKIWLTVLFIFRIMILVVAA) threads the bilayer. Topologically, residues 41–75 (ERVWGDEQDDFICNTLQPGCKNVCYDHFFPISHIR) are extracellular. The helical transmembrane segment at 76-96 (LWALQLIFVSTPALLVAMHVA) threads the bilayer. Residues 97–137 (YRRHEKKRQFRKGDQKCEYKDIEEIRTQRFRIEGTLWWTYT) are Cytoplasmic-facing. The helical transmembrane segment at 138–158 (CSIFFRLVFEAVFMYAFYFMY) threads the bilayer. Residues 159-189 (DGFRMPRLMKCSAWPCPNTVDCFVSRPTEKT) are Extracellular-facing. A helical transmembrane segment spans residues 190–210 (VFTIFMIAVSSICILLNVAEL). Over 211–263 (CYLLTKFFLRRSRKAGNQKHHPNHENKEETKQNEMNELISDSCQNTVIGFTSS) the chain is Cytoplasmic.

This sequence belongs to the connexin family. Beta-type (group I) subfamily. In terms of assembly, a connexon is composed of a hexamer of connexins. Exclusively expressed in the cochlea of the inner ear, where it is found in cells of the tegmentum vasculosum, cuboidal cells, supporting cells and clear cells.

Its subcellular location is the cell membrane. The protein resides in the cell junction. It localises to the gap junction. Functionally, one gap junction consists of a cluster of closely packed pairs of transmembrane channels, the connexons, through which materials of low MW diffuse from one cell to a neighboring cell. The protein is Gap junction beta-6 protein (GJB6) of Gallus gallus (Chicken).